The following is a 361-amino-acid chain: tRNA N6-adenosine threonylcarbamoyltransferase (361 aa).

The Fe cation site is built by H110 and H114. Residues 132–136 (LVSGG), D165, G178, D182, and N289 contribute to the substrate site. D317 lines the Fe cation pocket.

The protein belongs to the KAE1 / TsaD family. Fe(2+) is required as a cofactor.

Its subcellular location is the cytoplasm. It carries out the reaction L-threonylcarbamoyladenylate + adenosine(37) in tRNA = N(6)-L-threonylcarbamoyladenosine(37) in tRNA + AMP + H(+). In terms of biological role, required for the formation of a threonylcarbamoyl group on adenosine at position 37 (t(6)A37) in tRNAs that read codons beginning with adenine. Is involved in the transfer of the threonylcarbamoyl moiety of threonylcarbamoyl-AMP (TC-AMP) to the N6 group of A37, together with TsaE and TsaB. TsaD likely plays a direct catalytic role in this reaction. The protein is tRNA N6-adenosine threonylcarbamoyltransferase of Nitratidesulfovibrio vulgaris (strain ATCC 29579 / DSM 644 / CCUG 34227 / NCIMB 8303 / VKM B-1760 / Hildenborough) (Desulfovibrio vulgaris).